The chain runs to 190 residues: DNA dC-&gt;dU-editing enzyme APOBEC-3C (190 aa).

The 110-residue stretch at 29–138 folds into the CMP/dCMP-type deaminase domain; the sequence is DRNETWLCFT…TDYQEGLRSL (110 aa). Histidine 66, cysteine 97, and cysteine 100 together coordinate Zn(2+).

It belongs to the cytidine and deoxycytidylate deaminase family. As to quaternary structure, homodimer. Interacts with TRIB3. Requires Zn(2+) as cofactor.

Its subcellular location is the nucleus. It localises to the cytoplasm. The catalysed reaction is a 2'-deoxycytidine in single-stranded DNA + H2O + H(+) = a 2'-deoxyuridine in single-stranded DNA + NH4(+). In terms of biological role, DNA deaminase (cytidine deaminase) which acts as an inhibitor of retrovirus replication and retrotransposon mobility via deaminase-dependent and -independent mechanisms. May also play a role in the epigenetic regulation of gene expression through the process of active DNA demethylation. This chain is DNA dC-&gt;dU-editing enzyme APOBEC-3C (APOBEC3C), found in Gorilla gorilla gorilla (Western lowland gorilla).